The following is a 326-amino-acid chain: Archaeal actin homolog (326 aa).

ATP-binding positions include Tyr10–Lys14, Ser179, Gln231, Gly285–Asn288, and Gln311.

Belongs to the thermophilic archaeal actin family.

In terms of biological role, polymerizes into bundles of filaments. Polymerization requires NTP and is optimal with ATP, but GTP, UTP, CTP, and even the deoxy form of NTP can also support the polymerization reaction. This chain is Archaeal actin homolog, found in Thermoplasma volcanium (strain ATCC 51530 / DSM 4299 / JCM 9571 / NBRC 15438 / GSS1).